The sequence spans 628 residues: Basal cell adhesion molecule (628 aa).

An N-terminal signal peptide occupies residues 1-31 (MEPPDAPAQARGAPRLLLLAVLLAAHPDAQA). Ig-like V-type domains follow at residues 32–142 (EVRL…ARLN) and 147–257 (PEAT…PTFH). The Extracellular segment spans residues 32–547 (EVRLSVPPLV…GTVSPQTSQA (516 aa)). 3 cysteine pairs are disulfide-bonded: Cys-53–Cys-125, Cys-172–Cys-237, and Cys-291–Cys-337. Ig-like C2-type domains are found at residues 274-355 (PSTP…KTLE), 363-441 (PLEL…QNFT), and 448-541 (PELK…GTVS). Residues 309–312 (EQEE) form an interaction with laminin alpha5 region. N-linked (GlcNAc...) asparagine glycans are attached at residues Asn-321, Asn-377, Asn-383, Asn-419, and Asn-439. Cysteines 384 and 424 form a disulfide. A disulfide bridge connects residues Cys-473 and Cys-522. Residues 548-568 (GVAVMAVAVSVGLLLLVVAVF) traverse the membrane as a helical segment. Topologically, residues 569–628 (YCVRRKGGPCCRQRREKGAPPPGEPGLSHSGSEQPEQTGLLMGGASGGARGGSGGFGDEC) are cytoplasmic. The interval 579–628 (CRQRREKGAPPPGEPGLSHSGSEQPEQTGLLMGGASGGARGGSGGFGDEC) is disordered. Ser-596 is subject to Phosphoserine; by GSK3. Ser-598 carries the phosphoserine; by CK2 modification. The residue at position 600 (Ser-600) is a Phosphoserine. Gly residues predominate over residues 609–628 (LMGGASGGARGGSGGFGDEC). Ser-621 carries the post-translational modification Phosphoserine; by PKA or PKB/AKT1.

Homodimer. Interacts with ITGA4:ITGB1. Interacts with spectrins SPTA1 and SPTB1. Post-translationally, epinephrine-stimulated phosphorylation of Ser-621 by PKA enhances adhesion to laminin. Ser-621 can also be phosphorylated by AKT1. Wide tissue distribution (highest in the pancreas and very low in brain). Closely associated with the basal layer of cells in epithelia and the endothelium of blood vessel walls.

It is found in the cell membrane. In terms of biological role, transmembrane glycoprotein that functions as both a receptor and an adhesion molecule playing a crucial role in cell adhesion, motility, migration and invasion. Extracellular domain enables binding to extracellular matrix proteins, such as laminin, integrin and other ligands while its intracellular domain interacts with cytoskeletal proteins like hemoglobin, facilitating cell signal transduction. Serves as a receptor for laminin alpha-5/LAMA5 to promote cell adhesion. Mechanistically, JAK2 induces BCAM phosphorylation and activates its adhesion to laminin by stimulating a Rap1/AKT signaling pathway in the absence of EPOR. In Homo sapiens (Human), this protein is Basal cell adhesion molecule (BCAM).